The chain runs to 210 residues: Holliday junction branch migration complex subunit RuvA (210 aa).

The interval 1 to 64 (MIGLIEGRVC…EDAQLLYGFL (64 aa)) is domain I. Residues 65–143 (HPTERDVFRQ…HIQSDMSLLT (79 aa)) are domain II. Residues 144–154 (EVEQQIGIAAN) are flexible linker. Residues 155 to 210 (SEGVILAEVESALISLGYRDKEAQQAIKAARETDAGQQLVDTQSLLKLTLKQLSNF) are domain III.

Belongs to the RuvA family. In terms of assembly, homotetramer. Forms an RuvA(8)-RuvB(12)-Holliday junction (HJ) complex. HJ DNA is sandwiched between 2 RuvA tetramers; dsDNA enters through RuvA and exits via RuvB. An RuvB hexamer assembles on each DNA strand where it exits the tetramer. Each RuvB hexamer is contacted by two RuvA subunits (via domain III) on 2 adjacent RuvB subunits; this complex drives branch migration. In the full resolvosome a probable DNA-RuvA(4)-RuvB(12)-RuvC(2) complex forms which resolves the HJ.

It is found in the cytoplasm. Functionally, the RuvA-RuvB-RuvC complex processes Holliday junction (HJ) DNA during genetic recombination and DNA repair, while the RuvA-RuvB complex plays an important role in the rescue of blocked DNA replication forks via replication fork reversal (RFR). RuvA specifically binds to HJ cruciform DNA, conferring on it an open structure. The RuvB hexamer acts as an ATP-dependent pump, pulling dsDNA into and through the RuvAB complex. HJ branch migration allows RuvC to scan DNA until it finds its consensus sequence, where it cleaves and resolves the cruciform DNA. This Psychrobacter sp. (strain PRwf-1) protein is Holliday junction branch migration complex subunit RuvA.